Consider the following 846-residue polypeptide: Patched domain-containing protein 4 (846 aa).

10 consecutive transmembrane segments (helical) span residues 41 to 61 (HPVFFLTVPAVLTITFGLSAL), 230 to 250 (SILARSKVLVSLVLILTTATL), 265 to 285 (GLLGVLTVCISIITAAGIFFI), 293 to 313 (TLLGIPFFAMGHGTKGVFELL), 336 to 356 (VMVTYTMTSSLYFITFGMGAS), 373 to 393 (VSILLNYFYIFSFFGSCLVFA), 465 to 485 (PFVVILYLIYASFSFMGCLQI), 660 to 680 (PVLIAGFGVLLVLILTFFLVI), 686 to 706 (FWLILSVTSIELGVLGLMTLW), and 718 to 738 (LIYTLNFAIDHCAPLLFTFVL). One can recognise an SSD domain in the interval 233–392 (ARSKVLVSLV…FSFFGSCLVF (160 aa)). N762 is a glycosylation site (N-linked (GlcNAc...) asparagine). 2 helical membrane passes run 765-785 (SFLIGLVPLLFVPSNLTFTLF) and 787-807 (CLLLTGGCTLLHCFVILPVFL).

This sequence belongs to the patched family.

It is found in the membrane. Functionally, could act as a repressor of canonical hedgehog signaling by antagonizing the effects of SMO, as suggested by down-regulation of hedgehog target genes, including GLI1, PTCH1, and PTCH2 in PTCHD4-expressing cells. This chain is Patched domain-containing protein 4 (PTCHD4), found in Homo sapiens (Human).